The following is a 109-amino-acid chain: Larval cuticle protein 1 (109 aa).

An N-terminal signal peptide occupies residues 1–14 (MILVALALVALAVA). Residues 34-107 (EGSYQFGFET…AEGSSIPKPA (74 aa)) form the Chitin-binding type R&amp;R domain.

Its function is as follows. Component of the cuticle of the larva of Helicoverpa armigera. In Helicoverpa armigera (Cotton bollworm), this protein is Larval cuticle protein 1 (LCP1).